The following is a 299-amino-acid chain: 4-hydroxybenzoate octaprenyltransferase (299 aa).

Transmembrane regions (helical) follow at residues 31-51, 54-74, 105-125, 148-168, 177-197, 241-261, and 277-297; these read IGIYLVLWPTLWSLWIAADGL, WDVLVIFVLGVVLMRSAGCVI, VLFFVALLVIAFILVLFTNPL, QLPQIVLGAAFAWSIPMAFAA, IWVLYTAVVLWTVAYDTFYAM, FGLGFSFKVSLLVAGGLFAYQ, and FLHNNWVGLVVFLGILVDKLI.

The protein belongs to the UbiA prenyltransferase family. The cofactor is Mg(2+).

It is found in the cell inner membrane. The catalysed reaction is all-trans-octaprenyl diphosphate + 4-hydroxybenzoate = 4-hydroxy-3-(all-trans-octaprenyl)benzoate + diphosphate. It participates in cofactor biosynthesis; ubiquinone biosynthesis. Its function is as follows. Catalyzes the prenylation of para-hydroxybenzoate (PHB) with an all-trans polyprenyl group. Mediates the second step in the final reaction sequence of ubiquinone-8 (UQ-8) biosynthesis, which is the condensation of the polyisoprenoid side chain with PHB, generating the first membrane-bound Q intermediate 3-octaprenyl-4-hydroxybenzoate. The polypeptide is 4-hydroxybenzoate octaprenyltransferase (Saccharophagus degradans (strain 2-40 / ATCC 43961 / DSM 17024)).